The chain runs to 415 residues: Putative F-box/FBD/LRR-repeat protein At3g49040 (415 aa).

The 49-residue stretch at 10-58 (EDRISELHEALLVHIMSSLPTKTVVATSVLSKRWRHVWKTVQNLKFVSK) folds into the F-box domain. LRR repeat units lie at residues 60-86 (HQTF…DLEF), 87-114 (SNQL…VLDL), 143-170 (TLTL…HLYK), 171-196 (VHFY…IVHR), and 213-241 (RLTI…NIRR). Positions 272 to 377 (ILESLTSAKR…TSLKKATFST (106 aa)) constitute an FBD domain.

The protein is Putative F-box/FBD/LRR-repeat protein At3g49040 of Arabidopsis thaliana (Mouse-ear cress).